Consider the following 90-residue polypeptide: UPF0367 protein Ava_2513 (90 aa).

This sequence belongs to the UPF0367 family.

This is UPF0367 protein Ava_2513 from Trichormus variabilis (strain ATCC 29413 / PCC 7937) (Anabaena variabilis).